The primary structure comprises 308 residues: F420-non-reducing hydrogenase subunit G (308 aa).

It belongs to the [NiFe]/[NiFeSe] hydrogenase small subunit family. The F420-non-reducing hydrogenase is composed of three subunits; MvhA, MvhD and MvhG. It forms a complex with the heterodisulfide reductase (hdr).

In terms of biological role, part of a complex that provides reducing equivalents for heterodisulfide reductase. The polypeptide is F420-non-reducing hydrogenase subunit G (mvhG) (Methanothermobacter thermautotrophicus (strain ATCC 29096 / DSM 1053 / JCM 10044 / NBRC 100330 / Delta H) (Methanobacterium thermoautotrophicum)).